Reading from the N-terminus, the 360-residue chain is Coiled-coil domain-containing protein 86 (360 aa).

The segment covering 1–12 (MDTPLRRSRRLG) has biased composition (basic residues). Disordered regions lie at residues 1 to 314 (MDTP…ENER) and 328 to 360 (LKRA…AAKI). 5 positions are modified to phosphoserine: Ser21, Ser24, Ser47, Ser50, and Ser58. Position 65 is a phosphothreonine (Thr65). Residues Ser66, Ser69, Ser80, Ser91, Ser102, Ser110, Ser113, and Ser128 each carry the phosphoserine modification. A compositionally biased stretch (polar residues) spans 66-83 (SPGSPRLQQGSGLESPQG). The span at 153–164 (QLPPVPGSPEPY) shows a compositional bias: pro residues. Ser188, Ser217, and Ser218 each carry phosphoserine. Residues 238-254 (GKPKSGRVWKDRSKKRF) are compositionally biased toward basic residues. Residues 272-323 (KERQERKLAKDFARHLEEEKERRRQEKKQRRAENLKRRLENERKAEVVQVIR) are a coiled coil. Basic and acidic residues-rich tracts occupy residues 273–295 (ERQE…ERRR) and 302–314 (RAEN…ENER). A Citrulline modification is found at Arg342.

Citrullinated by PADI4.

Its subcellular location is the nucleus. It is found in the chromosome. It localises to the nucleolus. In terms of biological role, required for proper chromosome segregation during mitosis and error-free mitotic progression. The polypeptide is Coiled-coil domain-containing protein 86 (Pongo abelii (Sumatran orangutan)).